Reading from the N-terminus, the 759-residue chain is Hormone-sensitive lipase (759 aa).

The short motif at 349-351 (HGG) is the Involved in the stabilization of the negatively charged intermediate by the formation of the oxyanion hole element. Serine 423 is a catalytic residue. Residues 534–553 (GRKPQKTTSPTAESVRPTES) form a disordered region. Residue serine 557 is modified to Phosphoserine. Phosphoserine; by AMPK is present on serine 559. At threonine 574 the chain carries Phosphothreonine. Residues 583–604 (LSNSEPSDSPEMSQSMETLGPS) form a disordered region. The segment covering 585–604 (NSEPSDSPEMSQSMETLGPS) has biased composition (polar residues). Phosphoserine occurs at positions 597, 618, 650, and 651. Residues aspartate 694 and histidine 724 contribute to the active site.

Belongs to the 'GDXG' lipolytic enzyme family. Monomer and homodimer. Interacts with CAVIN1 in the adipocyte cytoplasm. Interacts with PLIN5. In terms of processing, phosphorylation by AMPK reduces its translocation towards the lipid droplets.

The protein localises to the cell membrane. It localises to the membrane. Its subcellular location is the caveola. The protein resides in the cytoplasm. It is found in the cytosol. The protein localises to the lipid droplet. It catalyses the reaction a diacylglycerol + H2O = a monoacylglycerol + a fatty acid + H(+). It carries out the reaction a triacylglycerol + H2O = a diacylglycerol + a fatty acid + H(+). The catalysed reaction is a monoacylglycerol + H2O = glycerol + a fatty acid + H(+). The enzyme catalyses Hydrolyzes glycerol monoesters of long-chain fatty acids.. It catalyses the reaction cholesteryl (9Z-octadecenoate) + H2O = cholesterol + (9Z)-octadecenoate + H(+). It carries out the reaction all-trans-retinyl hexadecanoate + H2O = all-trans-retinol + hexadecanoate + H(+). The catalysed reaction is 1,2-di-(9Z-octadecenoyl)-glycerol + H2O = (9Z-octadecenoyl)-glycerol + (9Z)-octadecenoate + H(+). The enzyme catalyses 2-(5Z,8Z,11Z,14Z-eicosatetraenoyl)-glycerol + H2O = glycerol + (5Z,8Z,11Z,14Z)-eicosatetraenoate + H(+). It catalyses the reaction 1-(9Z-octadecenoyl)-glycerol + H2O = glycerol + (9Z)-octadecenoate + H(+). It carries out the reaction 2-(9Z-octadecenoyl)-glycerol + H2O = glycerol + (9Z)-octadecenoate + H(+). The catalysed reaction is 1-O-hexadecyl-2-acetyl-sn-glycerol + H2O = 1-O-hexadecyl-sn-glycerol + acetate + H(+). The enzyme catalyses 1,2-di-(9Z-octadecenoyl)-sn-glycerol + H2O = (9Z-octadecenoyl)-glycerol + (9Z)-octadecenoate + H(+). It catalyses the reaction 1,3-di-(9Z-octadecenoyl)-glycerol + H2O = 1-(9Z-octadecenoyl)-glycerol + (9Z)-octadecenoate + H(+). It carries out the reaction 1,2-di-(9Z-octadecenoyl)-glycerol + (9Z)-octadecenoate + H(+) = 1,2,3-tri-(9Z-octadecenoyl)-glycerol + H2O. The catalysed reaction is 2,3-di-(9Z)-octadecenoyl-sn-glycerol + H2O = 2-(9Z-octadecenoyl)-glycerol + (9Z)-octadecenoate + H(+). The enzyme catalyses 1,2,3-tri-(9Z-octadecenoyl)-glycerol + H2O = di-(9Z)-octadecenoylglycerol + (9Z)-octadecenoate + H(+). It catalyses the reaction 1,2-di-(9Z-octadecenoyl)-glycerol + H2O = 2-(9Z-octadecenoyl)-glycerol + (9Z)-octadecenoate + H(+). It functions in the pathway glycerolipid metabolism; triacylglycerol degradation. Lipase with broad substrate specificity, catalyzing the hydrolysis of triacylglycerols (TAGs), diacylglycerols (DAGs), monoacylglycerols (MAGs), cholesteryl esters and retinyl esters. Shows a preferential hydrolysis of DAGs over TAGs and MAGs and of the fatty acid (FA) esters at the sn-1 and sn-2 positions of the glycerol backbone in TAGs. Preferentially hydrolyzes FA esters at the sn-3 position of the glycerol backbone in DAGs. Catalyzes the hydrolysis of 2-arachidonoylglycerol, an endocannabinoid and of 2-acetyl monoalkylglycerol ether, the penultimate precursor of the pathway for de novo synthesis of platelet-activating factor. In adipose tissue and heart, it primarily hydrolyzes stored triglycerides to free fatty acids, while in steroidogenic tissues, it principally converts cholesteryl esters to free cholesterol for steroid hormone production. This Mus musculus (Mouse) protein is Hormone-sensitive lipase (Lipe).